The following is a 496-amino-acid chain: Glycerol kinase (496 aa).

Threonine 12 contacts ADP. ATP-binding residues include threonine 12, threonine 13, and serine 14. Threonine 12 provides a ligand contact to sn-glycerol 3-phosphate. Arginine 16 lines the ADP pocket. The sn-glycerol 3-phosphate site is built by arginine 82, glutamate 83, and tyrosine 134. Positions 82, 83, and 134 each coordinate glycerol. Histidine 230 is subject to Phosphohistidine; by HPr. Aspartate 244 lines the sn-glycerol 3-phosphate pocket. Residues aspartate 244 and glutamine 245 each coordinate glycerol. ADP is bound by residues threonine 266 and glycine 309. ATP-binding residues include threonine 266, glycine 309, glutamine 313, and glycine 410. ADP contacts are provided by glycine 410 and asparagine 414.

Belongs to the FGGY kinase family. Homotetramer and homodimer (in equilibrium). The phosphoenolpyruvate-dependent sugar phosphotransferase system (PTS), including enzyme I, and histidine-containing protein (HPr) are required for the phosphorylation, which leads to the activation of the enzyme.

It carries out the reaction glycerol + ATP = sn-glycerol 3-phosphate + ADP + H(+). It functions in the pathway polyol metabolism; glycerol degradation via glycerol kinase pathway; sn-glycerol 3-phosphate from glycerol: step 1/1. Its activity is regulated as follows. Activated by phosphorylation and inhibited by fructose 1,6-bisphosphate (FBP). In terms of biological role, key enzyme in the regulation of glycerol uptake and metabolism. Catalyzes the phosphorylation of glycerol to yield sn-glycerol 3-phosphate. The protein is Glycerol kinase of Bacillus subtilis (strain 168).